A 790-amino-acid polypeptide reads, in one-letter code: Polyribonucleotide nucleotidyltransferase (790 aa).

Residues Asp498 and Asp504 each contribute to the Mg(2+) site. One can recognise a KH domain in the interval Pro565–Ile624. The region spanning Gly634 to Lys702 is the S1 motif domain. Residues Ala710–Asn790 form a disordered region. The span at Pro739–Gly755 shows a compositional bias: basic and acidic residues. A compositionally biased stretch (pro residues) spans Ser757–Gly772.

It belongs to the polyribonucleotide nucleotidyltransferase family. The cofactor is Mg(2+).

The protein localises to the cytoplasm. The enzyme catalyses RNA(n+1) + phosphate = RNA(n) + a ribonucleoside 5'-diphosphate. Its function is as follows. Involved in mRNA degradation. Catalyzes the phosphorolysis of single-stranded polyribonucleotides processively in the 3'- to 5'-direction. The sequence is that of Polyribonucleotide nucleotidyltransferase from Thermomicrobium roseum (strain ATCC 27502 / DSM 5159 / P-2).